The primary structure comprises 1488 residues: Chromosome partition protein MukB (1488 aa).

ATP is bound at residue 34 to 41; that stretch reads GGNGAGKS. Coiled coils occupy residues 326-418, 444-472, and 509-602; these read LEAD…QYNQ, LDTF…QTAH, and RHLA…RRAP. Residues 666–783 are flexible hinge; it reads PGGAEDQRLN…SLPIFGRAAR (118 aa). Coiled-coil stretches lie at residues 835–923, 977–1116, and 1209–1265; these read EAEI…AKLE, EMLS…AKAG, and VEAI…LQSV. The tract at residues 1049-1074 is disordered; it reads ADSGAEERARQRRDELHAQLSNNRSR. Over residues 1051–1065 the composition is skewed to basic and acidic residues; sequence SGAEERARQRRDELH.

Belongs to the SMC family. MukB subfamily. Homodimerization via its hinge domain. Binds to DNA via its C-terminal region. Interacts, and probably forms a ternary complex, with MukE and MukF via its C-terminal region. The complex formation is stimulated by calcium or magnesium. Interacts with tubulin-related protein FtsZ.

Its subcellular location is the cytoplasm. The protein localises to the nucleoid. Functionally, plays a central role in chromosome condensation, segregation and cell cycle progression. Functions as a homodimer, which is essential for chromosome partition. Involved in negative DNA supercoiling in vivo, and by this means organize and compact chromosomes. May achieve or facilitate chromosome segregation by condensation DNA from both sides of a centrally located replisome during cell division. This Salmonella agona (strain SL483) protein is Chromosome partition protein MukB.